Consider the following 339-residue polypeptide: Homeobox protein Hox-D13 (339 aa).

The segment at 1-33 (MSRSGTWDMDGLRADGGAAGAAPASSSSSVAAP) is disordered. Residues 20–33 (GAAPASSSSSVAAP) are compositionally biased toward low complexity. Positions 272-331 (GRKKRVPYTKLQLKELENEYAINKFINKDKRRRISAATNLSERQVTIWFQNRRVKDKKIV) form a DNA-binding region, homeobox.

The protein belongs to the Abd-B homeobox family.

The protein localises to the nucleus. Functionally, sequence-specific transcription factor that binds gene promoters and activates their transcription. Part of a developmental regulatory system that provides cells with specific positional identities on the anterior-posterior axis. The chain is Homeobox protein Hox-D13 (Hoxd13) from Mus musculus (Mouse).